Reading from the N-terminus, the 252-residue chain is Thiazole synthase (252 aa).

Residue K91 is the Schiff-base intermediate with DXP of the active site. Residues G152, 179 to 180 (AG), and 201 to 202 (NT) contribute to the 1-deoxy-D-xylulose 5-phosphate site.

This sequence belongs to the ThiG family. In terms of assembly, homotetramer. Forms heterodimers with either ThiH or ThiS.

The protein resides in the cytoplasm. It catalyses the reaction [ThiS sulfur-carrier protein]-C-terminal-Gly-aminoethanethioate + 2-iminoacetate + 1-deoxy-D-xylulose 5-phosphate = [ThiS sulfur-carrier protein]-C-terminal Gly-Gly + 2-[(2R,5Z)-2-carboxy-4-methylthiazol-5(2H)-ylidene]ethyl phosphate + 2 H2O + H(+). It functions in the pathway cofactor biosynthesis; thiamine diphosphate biosynthesis. Its function is as follows. Catalyzes the rearrangement of 1-deoxy-D-xylulose 5-phosphate (DXP) to produce the thiazole phosphate moiety of thiamine. Sulfur is provided by the thiocarboxylate moiety of the carrier protein ThiS. In vitro, sulfur can be provided by H(2)S. The protein is Thiazole synthase of Erwinia amylovora (Fire blight bacteria).